The following is a 327-amino-acid chain: Cyclic AMP-responsive element-binding protein 1 (327 aa).

2 disordered regions span residues 1 to 27 and 94 to 113; these read MTME…QMTV and SEDS…RREI. Positions 87–146 constitute a KID domain; the sequence is QISTIAESEDSQESVDSVTDSQKRREILSRRPSYRKILNDLSSDAPGVPRIEEEKSEEET. Residue Ser119 is modified to Phosphoserine; by CaMK1, CaMK2, CaMK4, PKB/AKT1 or PKB/AKT2, RPS6KA3, RPS6KA4, RPS6KA5 and SGK1. Lys122 is covalently cross-linked (Glycyl lysine isopeptide (Lys-Gly) (interchain with G-Cter in SUMO2)). The disordered stretch occupies residues 126 to 151; it reads DLSSDAPGVPRIEEEKSEEETSAPAI. The residue at position 128 (Ser128) is a Phosphoserine; by CaMK2. A Phosphoserine; by HIPK2 modification is found at Ser257. A bZIP domain is found at 269–327; that stretch reads ARKREVRLMKNREAARECRRKKKEYVKCLENRVAVLENQNKTLIEELKALKDLYCHKSD. The segment at 270–295 is basic motif; it reads RKREVRLMKNREAARECRRKKKEYVK. Glycyl lysine isopeptide (Lys-Gly) (interchain with G-Cter in SUMO1) cross-links involve residues Lys271 and Lys290. The interval 297-318 is leucine-zipper; the sequence is LENRVAVLENQNKTLIEELKAL.

This sequence belongs to the bZIP family. Interacts with PPRC1. Binds DNA as a dimer. This dimer is stabilized by magnesium ions. Interacts, through the bZIP domain, with the coactivators CRTC1/TORC1, CRTC2/TORC2 and CRTC3/TORC3. Interacts (phosphorylated form) with TOX3. When phosphorylated on Ser-119, binds CREBBP. Interacts with ARRB1. Binds to HIPK2. Interacts with SGK1. Interacts with CREBL2; regulates CREB1 phosphorylation, stability and transcriptional activity. Interacts with TSSK4; this interaction facilitates phosphorylation on Ser-119. Forms a complex with KMT2A and CREBBP. Interacts with TOX4; CREB1 is required for full induction of TOX4-dependent activity and the interaction is increased by cAMP and inhibited by insulin. In terms of processing, phosphorylation of Ser-119 allows CREBBP binding. Stimulated by phosphorylation. Phosphorylated Ser-128 can be detected in the suprachiasmatic nucleus (SCN), the amygdala, the cortex, and the hippocampus but not in the striatum nor in the cerebellum. In the SCN, phosphorylation of Ser-128 and Ser-119 are stimulated by light exposure and submitted to circadian oscillations. In the retina, only phosphorylation of Ser-119 can be detected upon light exposure. Phosphorylation of both Ser-119 and Ser-128 in the SCN regulates the activity of CREB and participates in circadian rhythm generation. Phosphorylated upon calcium influx by CaMK4 and CaMK2 on Ser-119. CaMK4 is much more potent than CAMK2 in activating CREB. Phosphorylated by CaMK2 on Ser-128. Phosphorylation of Ser-128 blocks CREB-mediated transcription even when Ser-119 is phosphorylated. Phosphorylated by CaMK1. Phosphorylation of Ser-271 by HIPK2 in response to genotoxic stress promotes CREB1 activity, facilitating the recruitment of the coactivator CBP. Phosphorylated at Ser-119 by RPS6KA3, RPS6KA4 and RPS6KA5 in response to mitogenic or stress stimuli. CREBL2 positively regulates phosphorylation at Ser-119 thereby stimulating CREB1 transcriptional activity. In liver, phosphorylation is induced by fasting or glucagon in a circadian fashion. Phosphorylated by TSSK4 on Ser-119. Sumoylated with SUMO1. Sumoylation on Lys-290, but not on Lys-271, is required for nuclear localization of this protein. Sumoylation is enhanced under hypoxia, promoting nuclear localization and stabilization. In terms of tissue distribution, expressed in the heart (at protein level).

The protein localises to the nucleus. Its function is as follows. Phosphorylation-dependent transcription factor that stimulates transcription upon binding to the DNA cAMP response element (CRE), a sequence present in many viral and cellular promoters. Transcription activation is enhanced by the TORC coactivators which act independently of Ser-119 phosphorylation. Involved in different cellular processes including the synchronization of circadian rhythmicity and the differentiation of adipose cells. Regulates the expression of apoptotic and inflammatory response factors in cardiomyocytes in response to ERFE-mediated activation of AKT signaling. The sequence is that of Cyclic AMP-responsive element-binding protein 1 (Creb1) from Mus musculus (Mouse).